Consider the following 440-residue polypeptide: MAAKWEKKEGNQGELTFEIGADKISEGIDKAFQRTKKNLNVPGFRKGKVPRQIFNQMYGEEALYQDALNIVLPEAYEEAIKETEIEPVDQPQIDVDSMEKGKPWVLKAVVTVKPEVKLGQYKELSVTRQNTRVYAKDVDAELESRREKQAELVLKEDQPAAKGDTVVIDFKGFVDGEPFEGGESENYSLELGSNSFIPGFEDQLVGVKAGDETEVKVTFPKDYQAEDLQDKEATFKVTVHEVKTKELPELDDEFAKDVDEDVDTLEELKAKIKDELKEQKESAAHDAIEDEALNQAVDNAEIQAIPDAMKEDDIHRQMDQYLANMQQQGIDPKTYYKLTGTTEDDLHKQFAADAERRVKTNLVLEAVVEAENIKPSQDEIAAEVKDLASQYNMEESAVRGALTDDMLSHDIAIRQAVDLIADSAKQNAKAEDKKDDSDKN.

Residues 163-248 (GDTVVIDFKG…VHEVKTKELP (86 aa)) enclose the PPIase FKBP-type domain.

The protein belongs to the FKBP-type PPIase family. Tig subfamily.

Its subcellular location is the cytoplasm. The enzyme catalyses [protein]-peptidylproline (omega=180) = [protein]-peptidylproline (omega=0). Its function is as follows. Involved in protein export. Acts as a chaperone by maintaining the newly synthesized protein in an open conformation. Functions as a peptidyl-prolyl cis-trans isomerase. This Lactiplantibacillus plantarum (strain ATCC BAA-793 / NCIMB 8826 / WCFS1) (Lactobacillus plantarum) protein is Trigger factor.